A 247-amino-acid polypeptide reads, in one-letter code: Type III pantothenate kinase (247 aa).

Residue 6–13 (DVGNTSIY) coordinates ATP. Substrate is bound at residue 102 to 105 (GADL). Catalysis depends on D104, which acts as the Proton acceptor. K(+) is bound at residue D122. T125 is an ATP binding site. T176 is a binding site for substrate.

It belongs to the type III pantothenate kinase family. In terms of assembly, homodimer. Requires NH4(+) as cofactor. K(+) serves as cofactor.

The protein resides in the cytoplasm. The enzyme catalyses (R)-pantothenate + ATP = (R)-4'-phosphopantothenate + ADP + H(+). Its pathway is cofactor biosynthesis; coenzyme A biosynthesis; CoA from (R)-pantothenate: step 1/5. Functionally, catalyzes the phosphorylation of pantothenate (Pan), the first step in CoA biosynthesis. The protein is Type III pantothenate kinase of Acholeplasma laidlawii (strain PG-8A).